The chain runs to 258 residues: uncharacterized protein (258 aa).

The next 6 membrane-spanning stretches (helical) occupy residues 24–44, 70–90, 100–120, 130–150, 157–177, and 181–201; these read IPLF…VNIF, PLVH…FLLM, LCTI…AYLI, VYVG…LNLF, LLNL…VLGL, and FSIT…FSFA. H188 is a catalytic residue.

Belongs to the peptidase S54 family.

The protein localises to the golgi apparatus membrane. This is an uncharacterized protein from Schizosaccharomyces pombe (strain 972 / ATCC 24843) (Fission yeast).